Reading from the N-terminus, the 311-residue chain is Lipid A biosynthesis acyltransferase (311 aa).

Residues 19–39 (WLFWLGVAIWRSILCLPYPIL) traverse the membrane as a helical segment. The HXXXXD motif motif lies at 134–139 (HFLTLE).

Belongs to the LpxL/LpxM/LpxP family.

It is found in the cell inner membrane. The catalysed reaction is an alpha-Kdo-(2-&gt;4)-alpha-Kdo-(2-&gt;6)-lipid IVA + a fatty acyl-[ACP] = an alpha-Kdo-(2-&gt;4)-alpha-Kdo-(2-&gt;6)-(acyl)-lipid IVA + holo-[ACP]. It functions in the pathway glycolipid biosynthesis; KDO(2)-lipid A biosynthesis; KDO(2)-lipid A from CMP-3-deoxy-D-manno-octulosonate and lipid IV(A): step 3/4. It participates in bacterial outer membrane biogenesis; lipopolysaccharide biosynthesis. Catalyzes the transfer of an acyl chain from an acyl-[acyl-carrier-protein] (ACP) to a Kdo(2)-lipid IV(A) to form a Kdo(2)-(acyl)-lipid IV(A). In Haemophilus influenzae (strain ATCC 51907 / DSM 11121 / KW20 / Rd), this protein is Lipid A biosynthesis acyltransferase.